The following is a 527-amino-acid chain: Putative ABC transporter peptide-binding protein BOV_A0352 (527 aa).

A signal peptide spans 1–23; that stretch reads MRLRNFYSALALSAAVFAGPLYA.

Belongs to the bacterial solute-binding protein 5 family. In terms of assembly, the complex is composed of two ATP-binding proteins (BOV_A0347 and BOV_A0348), two transmembrane proteins (BOV_A0350 and BOV_A0351) and a solute-binding protein (BOV_A0352).

The protein localises to the periplasm. Its function is as follows. Probably part of an ABC transporter complex that could be involved in peptide import. This Brucella ovis (strain ATCC 25840 / 63/290 / NCTC 10512) protein is Putative ABC transporter peptide-binding protein BOV_A0352.